The sequence spans 346 residues: DNA-directed RNA polymerases I and III subunit RPAC1 (346 aa).

A2 bears the N-acetylalanine mark. At S4 the chain carries Phosphoserine.

Belongs to the archaeal Rpo3/eukaryotic RPB3 RNA polymerase subunit family. Component of the RNA polymerase I and RNA polymerase III complexes consisting of at least 13 and 17 subunits, respectively. Pol I complex consists of a ten-subunit catalytic core composed of POLR1A/RPA1, POLR1B/RPA2, POLR1C/RPAC1, POLR1D/RPAC2, POLR1H/RPA12, POLR2E/RPABC1, POLR2F/RPABC2, POLR2H/RPABC3, POLR2K/RPABC4 and POLR2L/RPABC5; a mobile stalk subunit POLR1F/RPA43 protruding from the core and additional subunits homologous to general transcription factors POLR1E/RPA49 and POLR1G/RPA34. Part of Pol I pre-initiation complex (PIC), in which Pol I core assembles with RRN3 and promoter-bound UTBF and SL1/TIF-IB complex. Pol III complex consists of a ten-subunit catalytic core composed of POLR3A/RPC1, POLR3B/RPC2, POLR1C/RPAC1, POLR1D/RPAC2, POLR3K/RPC10, POLR2E/RPABC1, POLR2F/RPABC2, POLR2H/RPABC3, POLR2K/RPABC4 and POLR2L/RPABC5; a mobile stalk composed of two subunits POLR3H/RPC8 and CRCP/RPC9, protruding from the core and functioning primarily in transcription initiation; and additional subunits homologous to general transcription factors of the RNA polymerase II machinery, POLR3C/RPC3-POLR3F/RPC6-POLR3G/RPC7 heterotrimer required for transcription initiation and POLR3D/RPC4-POLR3E/RPC5 heterodimer involved in both transcription initiation and termination.

It is found in the nucleus. Its subcellular location is the nucleolus. The protein localises to the cytoplasm. The protein resides in the cytosol. Its function is as follows. DNA-dependent RNA polymerase catalyzes the transcription of DNA into RNA using the four ribonucleoside triphosphates as substrates. Common component of RNA polymerases I and III which synthesize ribosomal RNA precursors and short non-coding RNAs including 5S rRNA, snRNAs, tRNAs and miRNAs, respectively. POLR1C/RPAC1 is part of the polymerase core and may function as a clamp element that moves to open and close the cleft. The protein is DNA-directed RNA polymerases I and III subunit RPAC1 of Homo sapiens (Human).